The primary structure comprises 490 residues: Protein nucleotidyltransferase YdiU (490 aa).

Residues Gly-86, Gly-88, Arg-89, Lys-109, Asp-121, Gly-122, Arg-172, and Arg-179 each contribute to the ATP site. Asp-248 (proton acceptor) is an active-site residue. Mg(2+) contacts are provided by Asn-249 and Asp-258. Asp-258 is a binding site for ATP.

This sequence belongs to the SELO family. Mg(2+) is required as a cofactor. Mn(2+) serves as cofactor.

The catalysed reaction is L-seryl-[protein] + ATP = 3-O-(5'-adenylyl)-L-seryl-[protein] + diphosphate. The enzyme catalyses L-threonyl-[protein] + ATP = 3-O-(5'-adenylyl)-L-threonyl-[protein] + diphosphate. It catalyses the reaction L-tyrosyl-[protein] + ATP = O-(5'-adenylyl)-L-tyrosyl-[protein] + diphosphate. It carries out the reaction L-histidyl-[protein] + UTP = N(tele)-(5'-uridylyl)-L-histidyl-[protein] + diphosphate. The catalysed reaction is L-seryl-[protein] + UTP = O-(5'-uridylyl)-L-seryl-[protein] + diphosphate. The enzyme catalyses L-tyrosyl-[protein] + UTP = O-(5'-uridylyl)-L-tyrosyl-[protein] + diphosphate. In terms of biological role, nucleotidyltransferase involved in the post-translational modification of proteins. It can catalyze the addition of adenosine monophosphate (AMP) or uridine monophosphate (UMP) to a protein, resulting in modifications known as AMPylation and UMPylation. In Rhizobium meliloti (strain 1021) (Ensifer meliloti), this protein is Protein nucleotidyltransferase YdiU.